The chain runs to 493 residues: Vacuolar-processing enzyme (493 aa).

An N-terminal signal peptide occupies residues 1–19 (MGSSQLSTLLFFTIVVTFL). An N-linked (GlcNAc...) asparagine glycan is attached at N147. H174 is a catalytic residue. Residue C216 is the Nucleophile of the active site. Cysteines 249 and 263 form a disulfide. N295 and N331 each carry an N-linked (GlcNAc...) asparagine glycan. Cystine bridges form between C429-C459 and C441-C476.

The protein belongs to the peptidase C13 family.

Its function is as follows. Asparagine-specific endopeptidase involved in the processing of vacuolar seed protein precursors into the mature forms. This Vicia sativa (Spring vetch) protein is Vacuolar-processing enzyme.